The primary structure comprises 244 residues: Sperm-egg fusion protein Juno (244 aa).

The N-terminal stretch at 1–19 (MAQWWQILLGLWAVLPTLA) is a signal peptide. 8 disulfide bridges follow: Cys-27–Cys-55, Cys-47–Cys-95, Cys-56–Cys-99, Cys-79–Cys-166, Cys-86–Cys-137, Cys-126–Cys-200, Cys-130–Cys-180, and Cys-143–Cys-160. The interval 62–81 (WEAHLEEPLLFNFSMMHCGL) is important for interaction with IZUMO1. N-linked (GlcNAc...) asparagine glycosylation occurs at Asn-73. N-linked (GlcNAc...) asparagine glycosylation occurs at Asn-185. Gly-222 carries GPI-anchor amidated glycine lipidation. Residues 223-244 (SALAPQLSYTLPAFSLCLLFHP) constitute a propeptide that is removed on maturation.

This sequence belongs to the folate receptor family. In terms of assembly, monomer. Interacts with IZUMO1; the interaction is direct. IZUMO1 and IZUMO1R/JUNO form a complex with 1:1 stoichiometry. Interacts with WDR54. Post-translationally, the protein is rapidly cleaved following fertilization, being only weakly detectable in zona-intact fertilized eggs at telophase II and undetectable at the pronuclear stage. Sheding is probably required to block to polyspermy and ensuring egg fusion with a single sperm. As to expression, widely expressed with higher expression in thymus, spleen and lung. Present at the cell surface of unfertilized oocytes, while it is barely detectable 30 to 40 minutes after fertilization (at protein level).

It localises to the cell membrane. Receptor for IZUMO1 present at the cell surface of oocytes (oolemma), which is essential for species-specific gamete recognition and fertilization. The IZUMO1:IZUMO1R/JUNO interaction is a necessary adhesion event between sperm and egg that is required for fertilization but is not sufficient for cell fusion. The ligand-receptor interaction probably does not act as a membrane 'fusogen'. Does not bind folate. The chain is Sperm-egg fusion protein Juno from Mus musculus (Mouse).